The primary structure comprises 236 residues: UPF0257 lipoprotein YnfC (236 aa).

A signal peptide spans 1 to 16 (MKYKLLPCLLAIFLTG). Cys-17 is lipidated: N-palmitoyl cysteine. The S-diacylglycerol cysteine moiety is linked to residue Cys-17.

It belongs to the UPF0257 family.

It is found in the cell membrane. The polypeptide is UPF0257 lipoprotein YnfC (Escherichia coli O7:K1 (strain IAI39 / ExPEC)).